We begin with the raw amino-acid sequence, 193 residues long: ATP synthase subunit b (193 aa).

The chain crosses the membrane as a helical span at residues 24 to 44; the sequence is PLAELIVGLLAFGLLVGFFFW.

This sequence belongs to the ATPase B chain family. In terms of assembly, F-type ATPases have 2 components, F(1) - the catalytic core - and F(0) - the membrane proton channel. F(1) has five subunits: alpha(3), beta(3), gamma(1), delta(1), epsilon(1). F(0) has three main subunits: a(1), b(2) and c(10-14). The alpha and beta chains form an alternating ring which encloses part of the gamma chain. F(1) is attached to F(0) by a central stalk formed by the gamma and epsilon chains, while a peripheral stalk is formed by the delta and b chains.

It is found in the cell membrane. F(1)F(0) ATP synthase produces ATP from ADP in the presence of a proton or sodium gradient. F-type ATPases consist of two structural domains, F(1) containing the extramembraneous catalytic core and F(0) containing the membrane proton channel, linked together by a central stalk and a peripheral stalk. During catalysis, ATP synthesis in the catalytic domain of F(1) is coupled via a rotary mechanism of the central stalk subunits to proton translocation. In terms of biological role, component of the F(0) channel, it forms part of the peripheral stalk, linking F(1) to F(0). In Parafrankia sp. (strain EAN1pec), this protein is ATP synthase subunit b.